Reading from the N-terminus, the 233-residue chain is Purine nucleoside phosphorylase DeoD-type (233 aa).

Histidine 4 serves as a coordination point for a purine D-ribonucleoside. Phosphate contacts are provided by residues glycine 20, arginine 24, arginine 43, and 87–90 (RIGT). A purine D-ribonucleoside contacts are provided by residues 179–181 (EME) and 203–204 (SD). The active-site Proton donor is aspartate 204.

This sequence belongs to the PNP/UDP phosphorylase family. As to quaternary structure, homohexamer; trimer of homodimers.

The enzyme catalyses a purine D-ribonucleoside + phosphate = a purine nucleobase + alpha-D-ribose 1-phosphate. The catalysed reaction is a purine 2'-deoxy-D-ribonucleoside + phosphate = a purine nucleobase + 2-deoxy-alpha-D-ribose 1-phosphate. In terms of biological role, catalyzes the reversible phosphorolytic breakdown of the N-glycosidic bond in the beta-(deoxy)ribonucleoside molecules, with the formation of the corresponding free purine bases and pentose-1-phosphate. The protein is Purine nucleoside phosphorylase DeoD-type of Helicobacter acinonychis (strain Sheeba).